We begin with the raw amino-acid sequence, 419 residues long: Putative competence-damage inducible protein (419 aa).

The protein belongs to the CinA family.

The protein is Putative competence-damage inducible protein of Streptococcus agalactiae serotype III (strain NEM316).